The chain runs to 311 residues: Ribosomal RNA large subunit methyltransferase F (311 aa).

The protein belongs to the methyltransferase superfamily. METTL16/RlmF family.

It localises to the cytoplasm. The catalysed reaction is adenosine(1618) in 23S rRNA + S-adenosyl-L-methionine = N(6)-methyladenosine(1618) in 23S rRNA + S-adenosyl-L-homocysteine + H(+). Specifically methylates the adenine in position 1618 of 23S rRNA. This is Ribosomal RNA large subunit methyltransferase F from Pectobacterium atrosepticum (strain SCRI 1043 / ATCC BAA-672) (Erwinia carotovora subsp. atroseptica).